The chain runs to 228 residues: Geranylgeranylglyceryl phosphate synthase (228 aa).

K13 serves as a coordination point for sn-glycerol 1-phosphate. The Mg(2+) site is built by D15 and T41. Sn-glycerol 1-phosphate-binding positions include 159 to 164, G189, and 209 to 210; these read YVEYSG and GN.

Belongs to the GGGP/HepGP synthase family. Group I subfamily. Mg(2+) serves as cofactor.

It is found in the cytoplasm. The enzyme catalyses sn-glycerol 1-phosphate + (2E,6E,10E)-geranylgeranyl diphosphate = sn-3-O-(geranylgeranyl)glycerol 1-phosphate + diphosphate. It functions in the pathway membrane lipid metabolism; glycerophospholipid metabolism. Its function is as follows. Prenyltransferase that catalyzes the transfer of the geranylgeranyl moiety of geranylgeranyl diphosphate (GGPP) to the C3 hydroxyl of sn-glycerol-1-phosphate (G1P). This reaction is the first ether-bond-formation step in the biosynthesis of archaeal membrane lipids. The polypeptide is Geranylgeranylglyceryl phosphate synthase (Methanosphaerula palustris (strain ATCC BAA-1556 / DSM 19958 / E1-9c)).